The chain runs to 298 residues: Lipoyl synthase 1 (298 aa).

The [4Fe-4S] cluster site is built by C34, C39, C45, C60, C64, C67, and S274. The 218-residue stretch at 46 to 263 folds into the Radical SAM core domain; that stretch reads FYQGTATFLM…RRLGESMGFL (218 aa).

Belongs to the radical SAM superfamily. Lipoyl synthase family. The cofactor is [4Fe-4S] cluster.

It is found in the cytoplasm. It catalyses the reaction [[Fe-S] cluster scaffold protein carrying a second [4Fe-4S](2+) cluster] + N(6)-octanoyl-L-lysyl-[protein] + 2 oxidized [2Fe-2S]-[ferredoxin] + 2 S-adenosyl-L-methionine + 4 H(+) = [[Fe-S] cluster scaffold protein] + N(6)-[(R)-dihydrolipoyl]-L-lysyl-[protein] + 4 Fe(3+) + 2 hydrogen sulfide + 2 5'-deoxyadenosine + 2 L-methionine + 2 reduced [2Fe-2S]-[ferredoxin]. It functions in the pathway protein modification; protein lipoylation via endogenous pathway; protein N(6)-(lipoyl)lysine from octanoyl-[acyl-carrier-protein]: step 2/2. Catalyzes the radical-mediated insertion of two sulfur atoms into the C-6 and C-8 positions of the octanoyl moiety bound to the lipoyl domains of lipoate-dependent enzymes, thereby converting the octanoylated domains into lipoylated derivatives. The chain is Lipoyl synthase 1 from Thermosynechococcus vestitus (strain NIES-2133 / IAM M-273 / BP-1).